Here is a 251-residue protein sequence, read N- to C-terminus: Imidazole glycerol phosphate synthase subunit HisF (251 aa).

Catalysis depends on residues D11 and D130.

Belongs to the HisA/HisF family. In terms of assembly, heterodimer of HisH and HisF.

The protein resides in the cytoplasm. It catalyses the reaction 5-[(5-phospho-1-deoxy-D-ribulos-1-ylimino)methylamino]-1-(5-phospho-beta-D-ribosyl)imidazole-4-carboxamide + L-glutamine = D-erythro-1-(imidazol-4-yl)glycerol 3-phosphate + 5-amino-1-(5-phospho-beta-D-ribosyl)imidazole-4-carboxamide + L-glutamate + H(+). Its pathway is amino-acid biosynthesis; L-histidine biosynthesis; L-histidine from 5-phospho-alpha-D-ribose 1-diphosphate: step 5/9. Its function is as follows. IGPS catalyzes the conversion of PRFAR and glutamine to IGP, AICAR and glutamate. The HisF subunit catalyzes the cyclization activity that produces IGP and AICAR from PRFAR using the ammonia provided by the HisH subunit. The sequence is that of Imidazole glycerol phosphate synthase subunit HisF from Chloroherpeton thalassium (strain ATCC 35110 / GB-78).